The sequence spans 173 residues: Glutamyl-tRNA(Gln) amidotransferase subunit C, mitochondrial (173 aa).

This sequence belongs to the GatC family. In terms of assembly, subunit of the heterotrimeric GatCAB amidotransferase (AdT) complex, composed of A, B and C subunits.

The protein resides in the mitochondrion. It catalyses the reaction L-glutamyl-tRNA(Gln) + L-glutamine + ATP + H2O = L-glutaminyl-tRNA(Gln) + L-glutamate + ADP + phosphate + H(+). Functionally, allows the formation of correctly charged Gln-tRNA(Gln) through the transamidation of misacylated Glu-tRNA(Gln) in the mitochondria. The reaction takes place in the presence of glutamine and ATP through an activated gamma-phospho-Glu-tRNA(Gln). This Drosophila persimilis (Fruit fly) protein is Glutamyl-tRNA(Gln) amidotransferase subunit C, mitochondrial.